The primary structure comprises 427 residues: UPF0761 membrane protein Plut_1323 (427 aa).

6 helical membrane passes run 51-71 (LLSI…FAVF), 105-125 (TFTM…VLIS), 147-167 (FTLY…SLAA), 188-208 (LLSL…YLLV), 221-241 (GALV…FYVA), and 251-271 (GALS…VVVL).

This sequence belongs to the UPF0761 family.

The protein localises to the cell inner membrane. The sequence is that of UPF0761 membrane protein Plut_1323 from Chlorobium luteolum (strain DSM 273 / BCRC 81028 / 2530) (Pelodictyon luteolum).